The chain runs to 329 residues: MQGSVTEFLKPRLVDIEQISSTHAKVILEPLERGFGHTLGNALRRILLSSMPGCAVTEVEIDGVLHEYSSKEGVQEDILEVLLNLKGLAVKVQNKDDVFLTLNKSGIGPVVAADITHDGDVEIVNPEHVICHLTDESASINMRIRVQRGRGYVPASARVHAQDEERPIGRLLVDACYSPVDRIAYNVEAARVEQRTDLDKLVIELETNGTIDPEEAIRRAATILAEQLDAFVDLRDVRQPEVKEEKPEFDPILLRPVDDLELTVRSANCLKAETIHYIGDLVQRTEVELLKTPNLGKKSLTEIKDVLASRGLSLGMRLENWPPASIAED.

The interval 1–235 (MQGSVTEFLK…EQLDAFVDLR (235 aa)) is alpha N-terminal domain (alpha-NTD). Positions 249–329 (FDPILLRPVD…NWPPASIAED (81 aa)) are alpha C-terminal domain (alpha-CTD).

The protein belongs to the RNA polymerase alpha chain family. In terms of assembly, homodimer. The RNAP catalytic core consists of 2 alpha, 1 beta, 1 beta' and 1 omega subunit. When a sigma factor is associated with the core the holoenzyme is formed, which can initiate transcription.

The catalysed reaction is RNA(n) + a ribonucleoside 5'-triphosphate = RNA(n+1) + diphosphate. In terms of biological role, DNA-dependent RNA polymerase catalyzes the transcription of DNA into RNA using the four ribonucleoside triphosphates as substrates. This chain is DNA-directed RNA polymerase subunit alpha, found in Pasteurella multocida (strain Pm70).